Reading from the N-terminus, the 360-residue chain is Phospho-N-acetylmuramoyl-pentapeptide-transferase (360 aa).

The next 10 helical transmembrane spans lie at 25-45, 73-93, 97-117, 135-155, 170-190, 199-219, 236-256, 263-283, 288-308, and 338-358; these read RGIL…PWMI, TMGG…WADL, YVWV…VDDY, FWQS…APSA, IPLG…SSNA, GLAI…CYLS, AGEL…FLWF, VFMG…MAVI, MVLF…VIQV, and VIVR…ATLK.

This sequence belongs to the glycosyltransferase 4 family. MraY subfamily. Mg(2+) is required as a cofactor.

The protein resides in the cell inner membrane. It catalyses the reaction UDP-N-acetyl-alpha-D-muramoyl-L-alanyl-gamma-D-glutamyl-meso-2,6-diaminopimeloyl-D-alanyl-D-alanine + di-trans,octa-cis-undecaprenyl phosphate = di-trans,octa-cis-undecaprenyl diphospho-N-acetyl-alpha-D-muramoyl-L-alanyl-D-glutamyl-meso-2,6-diaminopimeloyl-D-alanyl-D-alanine + UMP. It participates in cell wall biogenesis; peptidoglycan biosynthesis. In terms of biological role, catalyzes the initial step of the lipid cycle reactions in the biosynthesis of the cell wall peptidoglycan: transfers peptidoglycan precursor phospho-MurNAc-pentapeptide from UDP-MurNAc-pentapeptide onto the lipid carrier undecaprenyl phosphate, yielding undecaprenyl-pyrophosphoryl-MurNAc-pentapeptide, known as lipid I. The sequence is that of Phospho-N-acetylmuramoyl-pentapeptide-transferase from Pseudomonas syringae pv. syringae (strain B728a).